Consider the following 108-residue polypeptide: UPF0145 protein Ava_0420 (108 aa).

Belongs to the UPF0145 family.

The protein is UPF0145 protein Ava_0420 of Trichormus variabilis (strain ATCC 29413 / PCC 7937) (Anabaena variabilis).